The chain runs to 242 residues: Biosynthetic peptidoglycan transglycosylase (242 aa).

A helical membrane pass occupies residues 19-39 (LMVVLAVFWGGGIALFSVAPV).

This sequence belongs to the glycosyltransferase 51 family.

The protein localises to the cell inner membrane. It carries out the reaction [GlcNAc-(1-&gt;4)-Mur2Ac(oyl-L-Ala-gamma-D-Glu-L-Lys-D-Ala-D-Ala)](n)-di-trans,octa-cis-undecaprenyl diphosphate + beta-D-GlcNAc-(1-&gt;4)-Mur2Ac(oyl-L-Ala-gamma-D-Glu-L-Lys-D-Ala-D-Ala)-di-trans,octa-cis-undecaprenyl diphosphate = [GlcNAc-(1-&gt;4)-Mur2Ac(oyl-L-Ala-gamma-D-Glu-L-Lys-D-Ala-D-Ala)](n+1)-di-trans,octa-cis-undecaprenyl diphosphate + di-trans,octa-cis-undecaprenyl diphosphate + H(+). It participates in cell wall biogenesis; peptidoglycan biosynthesis. Functionally, peptidoglycan polymerase that catalyzes glycan chain elongation from lipid-linked precursors. The protein is Biosynthetic peptidoglycan transglycosylase of Escherichia coli (strain 55989 / EAEC).